A 684-amino-acid polypeptide reads, in one-letter code: DNA ligase (684 aa).

NAD(+) is bound by residues 48 to 52, 97 to 98, and Glu-129; these read DYEYD and SL. Lys-131 functions as the N6-AMP-lysine intermediate in the catalytic mechanism. NAD(+) contacts are provided by Arg-152, Glu-189, Lys-310, and Lys-334. Zn(2+) is bound by residues Cys-429, Cys-432, Cys-447, and Cys-452. The BRCT domain occupies 609-684; that stretch reads AQEGSLSGMS…ISWEELQAMI (76 aa).

The protein belongs to the NAD-dependent DNA ligase family. LigA subfamily. It depends on Mg(2+) as a cofactor. Mn(2+) is required as a cofactor.

It carries out the reaction NAD(+) + (deoxyribonucleotide)n-3'-hydroxyl + 5'-phospho-(deoxyribonucleotide)m = (deoxyribonucleotide)n+m + AMP + beta-nicotinamide D-nucleotide.. DNA ligase that catalyzes the formation of phosphodiester linkages between 5'-phosphoryl and 3'-hydroxyl groups in double-stranded DNA using NAD as a coenzyme and as the energy source for the reaction. It is essential for DNA replication and repair of damaged DNA. The protein is DNA ligase of Bdellovibrio bacteriovorus (strain ATCC 15356 / DSM 50701 / NCIMB 9529 / HD100).